A 79-amino-acid polypeptide reads, in one-letter code: Protein S100-G (79 aa).

Ser2 carries the N-acetylserine modification. 2 EF-hand domains span residues 13 to 48 (IFEKYAAKEGDPNQLSKEELKLLLQTEFPSLLKGPS) and 45 to 79 (KGPSTLDELFEELDKNGDGEVSFEEFQVLVKKISQ). Positions 26 and 31 each coordinate Ca(2+). The residue at position 42 (Ser42) is a Phosphoserine. Residues Asp58, Asn60, Asp62, Glu64, and Glu69 each coordinate Ca(2+).

The protein belongs to the S-100 family.

This Bos taurus (Bovine) protein is Protein S100-G (S100G).